Here is a 200-residue protein sequence, read N- to C-terminus: Small ribosomal subunit protein eS8A (200 aa).

2 disordered regions span residues 1 to 40 (MGIT…RIGP) and 123 to 145 (SKGK…KHSA). Over residues 135–145 (KSKHVQRKHSA) the composition is skewed to basic residues.

The protein belongs to the eukaryotic ribosomal protein eS8 family. As to quaternary structure, component of the small ribosomal subunit (SSU). Mature yeast ribosomes consist of a small (40S) and a large (60S) subunit. The 40S small subunit contains 1 molecule of ribosomal RNA (18S rRNA) and at least 33 different proteins. The large 60S subunit contains 3 rRNA molecules (25S, 5.8S and 5S rRNA) and at least 46 different proteins.

It localises to the cytoplasm. In terms of biological role, component of the ribosome, a large ribonucleoprotein complex responsible for the synthesis of proteins in the cell. The small ribosomal subunit (SSU) binds messenger RNAs (mRNAs) and translates the encoded message by selecting cognate aminoacyl-transfer RNA (tRNA) molecules. The large subunit (LSU) contains the ribosomal catalytic site termed the peptidyl transferase center (PTC), which catalyzes the formation of peptide bonds, thereby polymerizing the amino acids delivered by tRNAs into a polypeptide chain. The nascent polypeptides leave the ribosome through a tunnel in the LSU and interact with protein factors that function in enzymatic processing, targeting, and the membrane insertion of nascent chains at the exit of the ribosomal tunnel. The sequence is that of Small ribosomal subunit protein eS8A (rps801) from Schizosaccharomyces pombe (strain 972 / ATCC 24843) (Fission yeast).